An 864-amino-acid chain; its full sequence is MEDKNKTIKETLQGAADAGKRKKLIIKKKGDENSAPSSASPKKETIAESAPVKPLTPLPSRGDSGQSPIVRPAPSASKEVKYEESSRKQDSGQSGSRPLRDKDSQVRPSGDSSYPVSRSPFQKEDSNIIVSRPTQRPVRPNPGGSYQGNRGPGQGGGYQGNRGPGQGGGYQGNRGPGQGGGYQGNRGPGQQTGPGNRFGGSGPGNRSGGPGGRPMPITSAEVELSQARGSTGASKKKGHDKEKTSSDKRDFSGAENTKFFKQRFKKTKVVGVSGVSVPKEITVLENVQVGELAKKMNLKPGDVIGKLMKMGMMVTINNIIDAETAALLADEYGCKVKVVSLYEETIIEEEKDNEGDYINRPPVVTIMGHVDHGKTKLLDTIRRSSVIDTESGGITQHIGAYQVKTARGLITFLDTPGHEAFTSMRARGAKVTDIVILVVAADDGVMPQTLEAISHAKAAEVPIIVAINKIDLPTANPDKIMQELANHGLQSEEWGGQTMYVKISARENIGIDKLLEVILLQAEVMDLKANPKRRAKGTIIEAKLDPGRGSVATVLIQNGTLRVGDPFVAGVFSGRVRAMYNDLGQLIEEAGPAFPAQVTGIDGVPDAGAPFDAMADEKEARNISQHRIEFEKIGNAGAAAGTTSKVTLENMNEYIKLGALKELKVIIKADVRGSAEAIKESLEKLSTPEVKLNVIQSGAGAIVDMDVMLASASNALIIGFHVRANPKTIALAEKEQVQIKYYNIIYQVVDEIKLAMEGLLEPEKIEEVIGTAEIREIFKVSKIGNIAGCMVTSGKIQKSANVRVISDGVTKFDGKLKSLKRVKDDVNDVVSGFECGIQVDGYNDFKVGDTIEAYNVTVIKRKLE.

The segment at 1-252 is disordered; it reads MEDKNKTIKE…KTSSDKRDFS (252 aa). Over residues 78-90 the composition is skewed to basic and acidic residues; sequence KEVKYEESSRKQD. Polar residues predominate over residues 106–120; sequence VRPSGDSSYPVSRSP. Gly residues predominate over residues 150–212; the sequence is RGPGQGGGYQ…PGNRSGGPGG (63 aa). Residues 239–252 show a composition bias toward basic and acidic residues; sequence HDKEKTSSDKRDFS. The tr-type G domain occupies 359-528; sequence NRPPVVTIMG…LLQAEVMDLK (170 aa). The interval 368–375 is G1; it reads GHVDHGKT. 368-375 lines the GTP pocket; the sequence is GHVDHGKT. Residues 393–397 form a G2 region; sequence GITQH. The G3 stretch occupies residues 414–417; it reads DTPG. Residues 414 to 418 and 468 to 471 each bind GTP; these read DTPGH and NKID. Residues 468-471 form a G4 region; it reads NKID. The interval 504–506 is G5; that stretch reads SAR.

The protein belongs to the TRAFAC class translation factor GTPase superfamily. Classic translation factor GTPase family. IF-2 subfamily.

The protein localises to the cytoplasm. In terms of biological role, one of the essential components for the initiation of protein synthesis. Protects formylmethionyl-tRNA from spontaneous hydrolysis and promotes its binding to the 30S ribosomal subunits. Also involved in the hydrolysis of GTP during the formation of the 70S ribosomal complex. The chain is Translation initiation factor IF-2 from Leptospira borgpetersenii serovar Hardjo-bovis (strain L550).